The primary structure comprises 204 residues: Recombination protein RecR (204 aa).

The C4-type zinc finger occupies 63–78 (CRICCNVADSELCPIC). Positions 86–181 (NKICVVEQPQ…KVTRLARGLP (96 aa)) constitute a Toprim domain.

Belongs to the RecR family.

Its function is as follows. May play a role in DNA repair. It seems to be involved in an RecBC-independent recombinational process of DNA repair. It may act with RecF and RecO. The chain is Recombination protein RecR from Dehalococcoides mccartyi (strain ATCC BAA-2100 / JCM 16839 / KCTC 5957 / BAV1).